The following is a 588-amino-acid chain: Aspartate--tRNA ligase (588 aa).

Glu177 lines the L-aspartate pocket. The tract at residues 201-204 is aspartate; the sequence is QLFK. Arg223 contributes to the L-aspartate binding site. ATP is bound by residues 223–225 and Gln232; that span reads RDE. His451 provides a ligand contact to L-aspartate. Position 485 (Glu485) interacts with ATP. L-aspartate is bound at residue Arg492. 537–540 contributes to the ATP binding site; the sequence is GLDR.

It belongs to the class-II aminoacyl-tRNA synthetase family. Type 1 subfamily. Homodimer.

The protein resides in the cytoplasm. The enzyme catalyses tRNA(Asp) + L-aspartate + ATP = L-aspartyl-tRNA(Asp) + AMP + diphosphate. Its function is as follows. Catalyzes the attachment of L-aspartate to tRNA(Asp) in a two-step reaction: L-aspartate is first activated by ATP to form Asp-AMP and then transferred to the acceptor end of tRNA(Asp). This is Aspartate--tRNA ligase from Staphylococcus aureus (strain NCTC 8325 / PS 47).